A 559-amino-acid chain; its full sequence is Paxillin (559 aa).

An LD motif 1 motif is present at residues 3–15 (DLDALLADLESTT). The interval 17–139 (HISKRPVFLT…SPTMTSTSLG (123 aa)) is disordered. A Phosphotyrosine modification is found at tyrosine 31. The segment covering 45 to 54 (VPPPVPPPPS) has biased composition (pro residues). The span at 79–98 (QQPQSQSPIYSSSAKSSSAS) shows a compositional bias: low complexity. The residue at position 118 (tyrosine 118) is a Phosphotyrosine; by FAK1. The span at 121–137 (PNKQKSAEPSPTMTSTS) shows a compositional bias: polar residues. An LD motif 2 motif is present at residues 144 to 156 (ELDRLLLELNAVQ). 2 disordered regions span residues 158-213 (NPPS…GIED) and 225-262 (LESS…SASS). The short motif at 217-229 (SVESLLDELESSV) is the LD motif 3 element. Over residues 237–262 (TVSQGEVSSPQRVNASQQQTRISASS) the composition is skewed to polar residues. Residues 263–282 (ATRELDELMASLSDFKFMAQ) form a required for binding to PARVA and ILK region. Short sequence motifs (LD motif) lie at residues 266 to 277 (ELDELMASLSDF) and 301 to 313 (QLDT…QSDL). Positions 281-301 (AQGKAGGSSSPPSTTPKPGSQ) are disordered. LIM zinc-binding domains are found at residues 326–376 (CGAC…CEKD), 385–435 (CYYC…CRKD), 444–494 (CGGC…CEVH), and 503–553 (CSGC…CQNC).

In terms of assembly, interacts (via LD motif 4) with PARVA/PARVIN and ILK. In terms of processing, phosphorylated on tyrosine residues during integrin-mediated cell adhesion, embryonic development, fibroblast transformation and following stimulation of cells by mitogens.

It localises to the cytoplasm. The protein resides in the cytoskeleton. Its subcellular location is the cell junction. It is found in the focal adhesion. The protein localises to the cell cortex. Its function is as follows. Cytoskeletal protein involved in actin-membrane attachment at sites of cell adhesion to the extracellular matrix (focal adhesion). Binds in vitro to vinculin as well as to the SH3 domain of c-SRC and, when tyrosine phosphorylated, to the SH2 domain of v-CRK. The polypeptide is Paxillin (PXN) (Gallus gallus (Chicken)).